The primary structure comprises 84 residues: Small ribosomal subunit protein eS27 (84 aa).

A compositionally biased stretch (basic and acidic residues) spans 1–16; sequence MPLAKDPLHPSPEEEK. The segment at 1–25 is disordered; sequence MPLAKDPLHPSPEEEKRKHKKKRLV. Ser-11 bears the Phosphoserine mark. The segment at 38 to 60 adopts a C4-type zinc-finger fold; it reads PGCYKITTVFSHAQTVVLCVGCS.

The protein belongs to the eukaryotic ribosomal protein eS27 family. In terms of assembly, component of the small ribosomal subunit. Part of the small subunit (SSU) processome, composed of more than 70 proteins and the RNA chaperone small nucleolar RNA (snoRNA) U3. Requires Zn(2+) as cofactor.

The protein localises to the cytoplasm. Its subcellular location is the nucleus. It is found in the nucleolus. In terms of biological role, component of the small ribosomal subunit. The ribosome is a large ribonucleoprotein complex responsible for the synthesis of proteins in the cell. Required for proper rRNA processing and maturation of 18S rRNAs. Part of the small subunit (SSU) processome, first precursor of the small eukaryotic ribosomal subunit. During the assembly of the SSU processome in the nucleolus, many ribosome biogenesis factors, an RNA chaperone and ribosomal proteins associate with the nascent pre-rRNA and work in concert to generate RNA folding, modifications, rearrangements and cleavage as well as targeted degradation of pre-ribosomal RNA by the RNA exosome. The sequence is that of Small ribosomal subunit protein eS27 (RPS27) from Pongo abelii (Sumatran orangutan).